A 144-amino-acid polypeptide reads, in one-letter code: Large ribosomal subunit protein uL15 (144 aa).

Positions 1 to 48 are disordered; that stretch reads MIKLESLQDPSPRKRRTKLLGRGPSSGHGKTSCRGHKGDGSRSGYKRR.

The protein belongs to the universal ribosomal protein uL15 family. As to quaternary structure, part of the 50S ribosomal subunit.

In terms of biological role, binds to the 23S rRNA. The protein is Large ribosomal subunit protein uL15 of Chlamydia abortus (strain DSM 27085 / S26/3) (Chlamydophila abortus).